A 198-amino-acid chain; its full sequence is MKNKLIEKATELRNKGLTTGEIADELNISKDTTQWLIMQMTTVNKTKQKQKPDDFAINWKTIGSSSSRMQYIASALSDMAVEEGVVDAVVGISISGVPFATIMAEILDAELAVFHPIKHMKNESAQGALSHNFANIKNKTVVIVDDVITSGATITDAIRVCKKNGANPLVVTVLVDKKGLDDSDNVPIKSLIKINKVG.

Belongs to the purine/pyrimidine phosphoribosyltransferase family. GfcR subfamily.

In Methanosphaera stadtmanae (strain ATCC 43021 / DSM 3091 / JCM 11832 / MCB-3), this protein is Transcriptional regulator GfcR.